The primary structure comprises 918 residues: E3 ubiquitin-protein ligase CBL-B-A (918 aa).

Positions 1 to 18 (MASGSGSSSSTSSSALSG) are enriched in low complexity. The disordered stretch occupies residues 1–27 (MASGSGSSSSTSSSALSGRLPGSRSAN). The segment at 46 to 178 (PPKQAAADRR…KAIFPSGQFQ (133 aa)) is 4H. The Cbl-PTB domain occupies 46-354 (PPKQAAADRR…GRSYNPDLTG (309 aa)). The tract at residues 179–251 (GDNFRITKAD…FEFDIFTRLF (73 aa)) is EF-hand-like. Positions 232, 234, 236, 238, and 243 each coordinate Ca(2+). The segment at 252 to 354 (QPWGSILRNW…GRSYNPDLTG (103 aa)) is SH2-like. Arginine 297 contacts 4-O-phospho-L-tyrosine. Residues 355–383 (LCEPTPHDHIKVTQEQYELYCEMGSTFQL) are linker. The RING-type zinc-finger motif lies at 384 to 423 (CKICAENDKDVKIEPCGHLMCTSCLTSWQESDGQGCPFCR). Disordered stretches follow at residues 481–582 (NERQ…RTCR), 780–831 (FPPA…PPAR), and 857–918 (HSDP…MRPT). Residues 483–497 (RQNSPVTSPGSSPLS) are compositionally biased toward polar residues. Composition is skewed to pro residues over residues 554-576 (LPAP…PIPP) and 821-830 (PSQPPPPPPA). Residues 898-918 (KASNTKGELLLPNQNLIMRPT) show a composition bias toward polar residues.

Interacts with several SH3 domain-containing proteins and with poly-ubiquitinated proteins.

The protein localises to the cytoplasm. The catalysed reaction is S-ubiquitinyl-[E2 ubiquitin-conjugating enzyme]-L-cysteine + [acceptor protein]-L-lysine = [E2 ubiquitin-conjugating enzyme]-L-cysteine + N(6)-ubiquitinyl-[acceptor protein]-L-lysine.. It functions in the pathway protein modification; protein ubiquitination. Functionally, E3 ubiquitin-protein ligase which accepts ubiquitin from specific E2 ubiquitin-conjugating enzymes, and transfers it to substrates, generally promoting their degradation by the proteasome. The polypeptide is E3 ubiquitin-protein ligase CBL-B-A (cblb-a) (Xenopus laevis (African clawed frog)).